A 147-amino-acid polypeptide reads, in one-letter code: Nucleoside diphosphate kinase (147 aa).

Residues Lys-9, Arg-85, Thr-91, Arg-102, and Asn-112 each coordinate ATP. The active-site Pros-phosphohistidine intermediate is the His-115.

Belongs to the NDK family. Mg(2+) serves as cofactor.

It catalyses the reaction a 2'-deoxyribonucleoside 5'-diphosphate + ATP = a 2'-deoxyribonucleoside 5'-triphosphate + ADP. It carries out the reaction a ribonucleoside 5'-diphosphate + ATP = a ribonucleoside 5'-triphosphate + ADP. In terms of biological role, major role in the synthesis of nucleoside triphosphates other than ATP. The ATP gamma phosphate is transferred to the NDP beta phosphate via a ping-pong mechanism, using a phosphorylated active-site intermediate. The sequence is that of Nucleoside diphosphate kinase (NDK1) from Encephalitozoon cuniculi (strain GB-M1) (Microsporidian parasite).